The primary structure comprises 202 residues: Lipid A acyltransferase PagP (202 aa).

Positions 1–25 (MNYKDIINACILSGVFLLHSPSALA) are cleaved as a signal peptide. Residues His-74, Asp-117, and Ser-118 contribute to the active site.

Belongs to the lipid A palmitoyltransferase family. As to quaternary structure, homodimer.

The protein resides in the cell outer membrane. The catalysed reaction is a lipid A + a 1,2-diacyl-sn-glycero-3-phosphocholine = a hepta-acyl lipid A + a 2-acyl-sn-glycero-3-phosphocholine. The enzyme catalyses a lipid IVA + a 1,2-diacyl-sn-glycero-3-phosphocholine = a lipid IVB + a 2-acyl-sn-glycero-3-phosphocholine. It carries out the reaction a lipid IIA + a 1,2-diacyl-sn-glycero-3-phosphocholine = a lipid IIB + a 2-acyl-sn-glycero-3-phosphocholine. Transfers a fatty acid residue from the sn-1 position of a phospholipid to the N-linked hydroxyfatty acid chain on the proximal unit of lipid A or its precursors. The sequence is that of Lipid A acyltransferase PagP from Yersinia pseudotuberculosis serotype IB (strain PB1/+).